Here is a 400-residue protein sequence, read N- to C-terminus: Acetylornithine aminotransferase (400 aa).

Residues 106–107 and phenylalanine 132 each bind pyridoxal 5'-phosphate; that span reads GA. Residue arginine 135 participates in N(2)-acetyl-L-ornithine binding. Pyridoxal 5'-phosphate is bound at residue 217–220; it reads DEVQ. N6-(pyridoxal phosphate)lysine is present on lysine 246. Serine 274 provides a ligand contact to N(2)-acetyl-L-ornithine. Threonine 275 lines the pyridoxal 5'-phosphate pocket.

This sequence belongs to the class-III pyridoxal-phosphate-dependent aminotransferase family. ArgD subfamily. Homodimer. The cofactor is pyridoxal 5'-phosphate.

It is found in the cytoplasm. The enzyme catalyses N(2)-acetyl-L-ornithine + 2-oxoglutarate = N-acetyl-L-glutamate 5-semialdehyde + L-glutamate. The protein operates within amino-acid biosynthesis; L-arginine biosynthesis; N(2)-acetyl-L-ornithine from L-glutamate: step 4/4. The protein is Acetylornithine aminotransferase of Streptomyces clavuligerus.